We begin with the raw amino-acid sequence, 192 residues long: Iron sulfur cluster assembly protein 1, mitochondrial (192 aa).

The N-terminal 53 residues, 1–53, are a transit peptide targeting the mitochondrion; the sequence is MSVFRRSVQCVGVLPSILAQRSSLLARPANLQFLKTNSSKFVPQVTANVSRRM.

The protein belongs to the NifU family. In terms of assembly, homodimer. Component of the core Fe-S cluster (ISC) assembly machinery. Requires [2Fe-2S] cluster as cofactor.

The protein localises to the mitochondrion. The protein resides in the mitochondrion matrix. Its pathway is cofactor biosynthesis; iron-sulfur cluster biosynthesis. Functionally, scaffold protein for the de novo synthesis of iron-sulfur (Fe-S) clusters within mitochondria, which is required for maturation of both mitochondrial and cytoplasmic [2Fe-2S] and [4Fe-4S] proteins. First, a [2Fe-2S] cluster is transiently assembled on the scaffold protein isu1. In a second step, the cluster is released from isu1, transferred to a glutaredoxin, followed by the formation of mitochondrial [2Fe-2S] proteins, the synthesis of [4Fe-4S] clusters and their target-specific insertion into the recipient apoproteins. Cluster assembly on isu1 depends on the function of the cysteine desulfurase complex nfs1-isd11, which serves as the sulfur donor for cluster synthesis, the iron-binding protein frataxin as the putative iron donor, and the electron transfer chain comprised of ferredoxin reductase and ferredoxin, which receive their electrons from NADH. This chain is Iron sulfur cluster assembly protein 1, mitochondrial (isu1), found in Schizosaccharomyces pombe (strain 972 / ATCC 24843) (Fission yeast).